The primary structure comprises 341 residues: MLRLIDSISDNCTVKTALYGALLLGVYKLTTFALSLVSLVLDLWVLPPVNFAKYGAKKGKWAVITGASDGIGKEYATQLAAKGLNVVLVSRTESKLVALAEEIESKYKVSTKVLAFDVSLDAESSYEDLAATIADLPVTVLVNNVGQSHSIPVPFLETDEKELRNIITINNTATLKITQVVAPKIVHTVASEKKKTRGLILTMGSFGGLLPTPYLATYSGSKAFLQSWSNALSGELQPQGVDVELVISYLVTSAMSKIRRSSASIPNPKAFVKSVLRNVGRRVGAQERFGTTTPYWAHAFMHFGIVNSVGVYSKIANSLNLGMHKSIRSRALKKAARQKKD.

A helical membrane pass occupies residues 17–37 (ALYGALLLGVYKLTTFALSLV). The NADP(+) site is built by Val63, Asp117, Asn144, Tyr218, Lys222, Val251, and Ser253. The active-site Proton donor is the Tyr218. The Lowers pKa of active site Tyr role is filled by Lys222.

It belongs to the short-chain dehydrogenases/reductases (SDR) family.

The protein localises to the endoplasmic reticulum membrane. The enzyme catalyses a very-long-chain (3R)-3-hydroxyacyl-CoA + NADP(+) = a very-long-chain 3-oxoacyl-CoA + NADPH + H(+). It participates in lipid metabolism; fatty acid biosynthesis. In terms of biological role, component of the microsomal membrane bound fatty acid elongation system, which produces the 26-carbon very long-chain fatty acids (VLCFA) from palmitate. Catalyzes the reduction of the 3-ketoacyl-CoA intermediate that is formed in each cycle of fatty acid elongation. VLCFAs serve as precursors for ceramide and sphingolipids. The polypeptide is Very-long-chain 3-oxoacyl-CoA reductase (Meyerozyma guilliermondii (strain ATCC 6260 / CBS 566 / DSM 6381 / JCM 1539 / NBRC 10279 / NRRL Y-324) (Yeast)).